Reading from the N-terminus, the 368-residue chain is MSETAKKVIVGMSGGVDSSVSAWLLQQQGYQVEGLFMKNWEEDDGEEYCTAAADLADAQAVCDKLGIELHTVNFAAEYWDNVFELFLAEYKAGRTPNPDILCNKEIKFKAFLEFAAEDLGADYIATGHYVRRADVDGKSRLLRGLDSNKDQSYFLYTLSHEQIAQSLFPVGELEKPQVRKIAEDLGLVTAKKKDSTGICFIGERKFREFLGRYLPAQPGKIITVDGDEIGEHQGLMYHTLGQRKGLGIGGTKDGTEEPWYVVDKDVENNILIVAQGHEHPRLMSVGLIAQQLHWVDREPFTGTMRCTVKTRYRQTDIPCTVKALDADRIEVIFDEPVAAVTPGQSAVFYNGEVCLGGGIIEQRLPLPV.

ATP-binding positions include 11–18 (GMSGGVDS) and M37. Residues 97–99 (NPD) form an interaction with target base in tRNA region. C102 functions as the Nucleophile in the catalytic mechanism. C102 and C199 are joined by a disulfide. G127 provides a ligand contact to ATP. Positions 149 to 151 (KDQ) are interaction with tRNA. C199 acts as the Cysteine persulfide intermediate in catalysis. Positions 311–312 (RY) are interaction with tRNA.

Belongs to the MnmA/TRMU family. In terms of assembly, interacts with TusE.

The protein resides in the cytoplasm. The catalysed reaction is S-sulfanyl-L-cysteinyl-[protein] + uridine(34) in tRNA + AH2 + ATP = 2-thiouridine(34) in tRNA + L-cysteinyl-[protein] + A + AMP + diphosphate + H(+). Its function is as follows. Catalyzes the 2-thiolation of uridine at the wobble position (U34) of tRNA(Lys), tRNA(Glu) and tRNA(Gln), leading to the formation of s(2)U34, the first step of tRNA-mnm(5)s(2)U34 synthesis. Sulfur is provided by IscS, via a sulfur-relay system. Binds ATP and its substrate tRNAs. The sequence is that of tRNA-specific 2-thiouridylase MnmA from Escherichia coli O1:K1 / APEC.